Consider the following 89-residue polypeptide: Small ribosomal subunit protein bS18 (89 aa).

Over residues 1 to 15 (MTTANTNETAAAAAA) the composition is skewed to low complexity. Residues 1 to 22 (MTTANTNETAAAAAAKNRRNKK) are disordered.

The protein belongs to the bacterial ribosomal protein bS18 family. As to quaternary structure, part of the 30S ribosomal subunit. Forms a tight heterodimer with protein bS6.

Functionally, binds as a heterodimer with protein bS6 to the central domain of the 16S rRNA, where it helps stabilize the platform of the 30S subunit. The chain is Small ribosomal subunit protein bS18 from Caldanaerobacter subterraneus subsp. tengcongensis (strain DSM 15242 / JCM 11007 / NBRC 100824 / MB4) (Thermoanaerobacter tengcongensis).